The sequence spans 219 residues: Proteasome subunit beta 2 (219 aa).

A propeptide spans M1–G25 (removed in mature form; by autocatalysis). Catalysis depends on T26, which acts as the Nucleophile.

Belongs to the peptidase T1B family. As to quaternary structure, the 20S proteasome core is composed of 14 alpha and 14 beta subunits that assemble into four stacked heptameric rings, resulting in a barrel-shaped structure. The two inner rings, each composed of seven catalytic beta subunits, are sandwiched by two outer rings, each composed of seven alpha subunits. The catalytic chamber with the active sites is on the inside of the barrel. Has a gated structure, the ends of the cylinder being occluded by the N-termini of the alpha-subunits. Is capped at one or both ends by the proteasome regulatory ATPase, PAN.

The protein localises to the cytoplasm. The catalysed reaction is Cleavage of peptide bonds with very broad specificity.. The formation of the proteasomal ATPase PAN-20S proteasome complex, via the docking of the C-termini of PAN into the intersubunit pockets in the alpha-rings, triggers opening of the gate for substrate entry. Interconversion between the open-gate and close-gate conformations leads to a dynamic regulation of the 20S proteasome proteolysis activity. Component of the proteasome core, a large protease complex with broad specificity involved in protein degradation. This chain is Proteasome subunit beta 2, found in Aeropyrum pernix (strain ATCC 700893 / DSM 11879 / JCM 9820 / NBRC 100138 / K1).